Here is a 190-residue protein sequence, read N- to C-terminus: Pancreatic IgW, short secretory form (190 aa).

Residues 53 to 145 (PNITALVPSV…PPSNFRSMIS (93 aa)) enclose the Ig-like C1-type domain. Residue Asn54 is glycosylated (N-linked (GlcNAc...) asparagine). An intrachain disulfide couples Cys74 to Cys131. The N-linked (GlcNAc...) asparagine glycan is linked to Asn179.

As to expression, expressed in pancreas, spleen, epigonal organ and at low levels in several other tissues.

It is found in the secreted. This chain is Pancreatic IgW, short secretory form, found in Ginglymostoma cirratum (Nurse shark).